The chain runs to 501 residues: Bifunctional NAD(P)H-hydrate repair enzyme Nnr (501 aa).

Residues 1 to 221 (MESITSIEMY…PPEAELVVGP (221 aa)) are NAD(P)H-hydrate epimerase. Positions 9–217 (MYVADRNAEW…PIGIPPEAEL (209 aa)) constitute a YjeF N-terminal domain. Positions 56–60 (DNGGD) are NADPHX 1; for epimerase activity. Residues N57 and D127 each contribute to the K(+) site. The segment at 131-137 (GTGIRGV) is NADPHX 1; for epimerase activity. D160 serves as a coordination point for (6S)-NADPHX. S163 is a K(+) binding site. The 276-residue stretch at 220–495 (GPGDFAYLNF…ERLPRVIRRY (276 aa)) folds into the YjeF C-terminal domain. The tract at residues 221 to 501 (PGDFAYLNFT…IRRYAFESIR (281 aa)) is ADP-dependent (S)-NAD(P)H-hydrate dehydratase. G323 is a binding site for (6S)-NADPHX. The interval 371 to 377 (HAGEFKA) is NADPHX 2; for dehydratase activity. Residues 408–412 (KGRYD) and 427–436 (TPAMTVGGTG) each bind ADP. D437 is a (6S)-NADPHX binding site.

The protein in the N-terminal section; belongs to the NnrE/AIBP family. In the C-terminal section; belongs to the NnrD/CARKD family. K(+) is required as a cofactor.

The enzyme catalyses (6S)-NADHX + ADP = AMP + phosphate + NADH + H(+). It catalyses the reaction (6S)-NADPHX + ADP = AMP + phosphate + NADPH + H(+). It carries out the reaction (6R)-NADHX = (6S)-NADHX. The catalysed reaction is (6R)-NADPHX = (6S)-NADPHX. Bifunctional enzyme that catalyzes the epimerization of the S- and R-forms of NAD(P)HX and the dehydration of the S-form of NAD(P)HX at the expense of ADP, which is converted to AMP. This allows the repair of both epimers of NAD(P)HX, a damaged form of NAD(P)H that is a result of enzymatic or heat-dependent hydration. This Pyrobaculum aerophilum (strain ATCC 51768 / DSM 7523 / JCM 9630 / CIP 104966 / NBRC 100827 / IM2) protein is Bifunctional NAD(P)H-hydrate repair enzyme Nnr (nnr).